An 82-amino-acid polypeptide reads, in one-letter code: Small ribosomal subunit protein uS17 (82 aa).

Belongs to the universal ribosomal protein uS17 family. As to quaternary structure, part of the 30S ribosomal subunit.

In terms of biological role, one of the primary rRNA binding proteins, it binds specifically to the 5'-end of 16S ribosomal RNA. The polypeptide is Small ribosomal subunit protein uS17 (Shewanella piezotolerans (strain WP3 / JCM 13877)).